The primary structure comprises 284 residues: HTH-type transcriptional activator RhaR (284 aa).

The 99-residue stretch at 181–279 folds into the HTH araC/xylS-type domain; that stretch reads DMLMNALRAS…GVSPSAYRQR (99 aa). 2 DNA-binding regions (H-T-H motif) span residues 198 to 219 and 246 to 269; these read EAFCEQHHFSARSLRSRFKEQT and IGDIAALCGFEDSNYFSVVFHQAF.

Binds DNA as a dimer.

It localises to the cytoplasm. Functionally, activates expression of the rhaSR operon in response to L-rhamnose. This chain is HTH-type transcriptional activator RhaR, found in Pectobacterium carotovorum subsp. carotovorum (strain PC1).